We begin with the raw amino-acid sequence, 91 residues long: Cell division topological specificity factor (91 aa).

The protein belongs to the MinE family.

Prevents the cell division inhibition by proteins MinC and MinD at internal division sites while permitting inhibition at polar sites. This ensures cell division at the proper site by restricting the formation of a division septum at the midpoint of the long axis of the cell. This chain is Cell division topological specificity factor, found in Lachnospira eligens (strain ATCC 27750 / DSM 3376 / VPI C15-48 / C15-B4) (Eubacterium eligens).